The primary structure comprises 1588 residues: Paternally-expressed gene 3 protein (1588 aa).

The SCAN box domain occupies 46-128; that stretch reads HQRFRNLIYV…TLLENYKEMY (83 aa). Disordered stretches follow at residues 128-230, 266-306, and 319-349; these read YQPE…ESYQ, DGHS…RRGI, and KFIK…MSDD. The span at 129–142 shows a compositional bias: acidic residues; the sequence is QPEDDNNSDVTSDD. Composition is skewed to basic and acidic residues over residues 143 to 152, 161 to 182, 206 to 225, and 295 to 306; these read DMTRNRRESS, SGDR…DRWS, FEMD…RSQD, and PEAKKSTHRRGI. C2H2-type zinc fingers lie at residues 454–476, 507–529, and 565–587; these read YVCD…QIMH, FECK…RKIH, and YECR…QKIH. Residues 588 to 607 are compositionally biased toward basic and acidic residues; it reads FGDDKDNEREHERERERGET. Residues 588–610 form a disordered region; that stretch reads FGDDKDNEREHERERERGETFRP. The C2H2-type 4 zinc finger occupies 627–649; the sequence is YECKVCGETFLHSSSLKEHQKIH. Residues 838 to 930 are disordered; sequence LVASKPPRSH…EFSVPSSNVR (93 aa). The segment covering 868 to 881 has biased composition (basic and acidic residues); it reads LNDKRQKIPARENP. The segment at 969-991 adopts a C2H2-type 5 zinc-finger fold; sequence YECQECGECFAHSSDLTEHQKIH. Positions 1056 to 1104 are disordered; that stretch reads EKSHGEESQGENTDGEETHSEETHGQETIEDPVIQGSDMEDPQKDDPDD. Residues 1071-1082 show a composition bias toward basic and acidic residues; that stretch reads EETHSEETHGQE. C2H2-type zinc fingers lie at residues 1107–1129, 1163–1185, 1225–1247, 1282–1304, and 1332–1354; these read YECE…QKVH, YECP…QRIH, IRCL…MRLH, FECA…VTVH, and YECK…KELH. The disordered stretch occupies residues 1393–1495; that stretch reads EAAEPEVEAX…GIEDPEEGED (103 aa). The segment covering 1395–1415 has biased composition (acidic residues); it reads AEPEVEAXEPEVEAAEPEVEA. 7 consecutive repeat copies span residues 1397-1403, 1404-1410, 1411-1417, 1418-1422, 1425-1429, 1432-1436, and 1439-1443. The segment at 1397 to 1417 is 3 X 7 AA repeat of P-E-V-E-A-A-E; that stretch reads PEVEAXEPEVEAAEPEVEAAE. The segment at 1418–1443 is 4 X 5 AA repeat of P-X-G-E-A; the sequence is PNGEAEGPDGEAAEPIGEAGQPNGEA. 2 stretches are compositionally biased toward acidic residues: residues 1449-1466 and 1475-1495; these read DADE…ERAE and PEGD…EGED. C2H2-type zinc fingers lie at residues 1505-1527 and 1564-1586; these read YDCH…LKTH and FKCD…QNTH.

Belongs to the krueppel C2H2-type zinc-finger protein family. In terms of assembly, homodimer. Interacts with SIAH1A and SIAH2. Interacts with TRAF2.

It localises to the nucleus. Its subcellular location is the cytoplasm. Its function is as follows. Induces apoptosis in cooperation with SIAH1A. Acts as a mediator between p53/TP53 and BAX in a neuronal death pathway that is activated by DNA damage. Acts synergistically with TRAF2 and inhibits TNF induced apoptosis through activation of NF-kappa-B. This chain is Paternally-expressed gene 3 protein (PEG3), found in Pan paniscus (Pygmy chimpanzee).